The primary structure comprises 291 residues: Pyridoxal kinase PdxY (291 aa).

Substrate-binding positions include Ser-9 and 44–45 (TQ). Residues Asp-112, Val-144, Glu-149, Lys-182, and 207 to 210 (RPHL) contribute to the ATP site. Asp-221 contributes to the substrate binding site.

Belongs to the pyridoxine kinase family. PdxY subfamily. As to quaternary structure, homodimer. Mg(2+) serves as cofactor.

It catalyses the reaction pyridoxal + ATP = pyridoxal 5'-phosphate + ADP + H(+). It functions in the pathway cofactor metabolism; pyridoxal 5'-phosphate salvage; pyridoxal 5'-phosphate from pyridoxal: step 1/1. Functionally, pyridoxal kinase involved in the salvage pathway of pyridoxal 5'-phosphate (PLP). Catalyzes the phosphorylation of pyridoxal to PLP. The sequence is that of Pyridoxal kinase PdxY from Photobacterium profundum (strain SS9).